We begin with the raw amino-acid sequence, 101 residues long: Acylphosphatase (101 aa).

The Acylphosphatase-like domain maps to 15–101 (RMYARVYGLV…KGEFEDFETY (87 aa)). Catalysis depends on residues R30 and N48.

The protein belongs to the acylphosphatase family.

The enzyme catalyses an acyl phosphate + H2O = a carboxylate + phosphate + H(+). The chain is Acylphosphatase (acyP) from Saccharolobus solfataricus (strain ATCC 35092 / DSM 1617 / JCM 11322 / P2) (Sulfolobus solfataricus).